The chain runs to 467 residues: Uronate isomerase (467 aa).

This sequence belongs to the metallo-dependent hydrolases superfamily. Uronate isomerase family.

It carries out the reaction D-glucuronate = D-fructuronate. The enzyme catalyses aldehydo-D-galacturonate = keto-D-tagaturonate. The protein operates within carbohydrate metabolism; pentose and glucuronate interconversion. This chain is Uronate isomerase, found in Clostridium acetobutylicum (strain ATCC 824 / DSM 792 / JCM 1419 / IAM 19013 / LMG 5710 / NBRC 13948 / NRRL B-527 / VKM B-1787 / 2291 / W).